The chain runs to 219 residues: Transmembrane emp24 domain-containing protein 10 (219 aa).

Residues 1-31 form the signal peptide; that stretch reads MSGLFGPLSRPGPLPSAWLFLLLLGPSSVLG. The required for interaction with STX17 stretch occupies residues 1–142; sequence MSGLFGPLSR…KNYEEIAKVE (142 aa). At 32-185 the chain is on the lumenal side; sequence ISFHLPVNSR…RDTNESTNTR (154 aa). The 153-residue stretch at 41-193 folds into the GOLD domain; it reads RKCLREEIHK…TRVLYFSIFS (153 aa). The segment at 147–178 is required for TMED10 and TMED2 cis-Golgi network localization; the sequence is LEVELRRLEDLSESIVNDFAYMKKREEEMRDT. 2 positions are modified to dimethylated arginine: arginine 171 and arginine 176. The N-linked (GlcNAc...) asparagine glycan is linked to asparagine 179. A helical transmembrane segment spans residues 186-206; the sequence is VLYFSIFSMFCLIGLATWQVF. Residues 204 to 219 are interaction with COPG1; that stretch reads QVFYLRRFFKAKKLIE. Over 207-219 the chain is Cytoplasmic; it reads YLRRFFKAKKLIE. The interval 207–219 is interaction with ARF1 and IL1B; it reads YLRRFFKAKKLIE. The COPII vesicle coat-binding signature appears at 211–212; it reads FF. A COPI vesicle coat-binding motif is present at residues 211-219; it reads FFKAKKLIE.

This sequence belongs to the EMP24/GP25L family. As to quaternary structure, predominantly dimeric and to a lesser extent monomeric in the ER. Monomer and dimer in ERGIC and cis-Golgi network. Forms homooligomer (via GOLD domain); the assembly is promoted by direct binding with leaderless cargos and may form a protein channel that facilitates cargo entry into the ERGIC. Forms heterooligomeric complexes with other members of the p24 family such as TMED2, TMED7 and TMED9. Interacts (via GOLD domain) with TMED2 (via GOLD domain); the complex is required for export of TMED10 from the ER to the cis-Golgi network; the complex is proposed to be involved in cis-Golgi network dynamics and / or biogenesis. Associates with the COPI vesicle coat subunits (coatomer). Tetramerization of the cytoplasmic domain at the Golgi membrane in vitro; the complex is proposed to interact with COPI coatomer and induce budding of the vesicles. Interacts with COPG1; the interaction involves TMED10 homodimer. Interacts with ARF1 (GDP-bound); the interaction probably involves a TMED10 oligomer. Interacts with SEC23A, SEC24B, SEC24C and SEC24D components of the coat protein complex II/COPII, indicative of an association of TMED10 with the COPII vesicle coat. Interacts with CD59. Interacts with MPPE1/PGAP5; the complex might recruit and sort GPI-anchored proteins to the ER-exit site, or the interaction might lead to recycling of PGAP5 between the ER and the Golgi. Interacts with F2LR1/PAR2. Interacts with KDELR2/ERD2; the interaction is disrupted by KDELR2 ligand. Found in a complex composed at least of SURF4, TMED2 and TMED10. Associates with the presenilin-dependent gamma-secretase complex. Interacts with STX17; the interaction is direct. Interacts with IL-1; the interaction is direct. Interacts with RAB21 (active GTP-bound form); the interaction is indirect and regulates TMED10 abundance and localization at the Golgi.

The protein resides in the endoplasmic reticulum membrane. It localises to the endoplasmic reticulum-Golgi intermediate compartment membrane. The protein localises to the golgi apparatus membrane. Its subcellular location is the golgi apparatus. It is found in the cis-Golgi network membrane. The protein resides in the trans-Golgi network membrane. It localises to the cytoplasmic vesicle. The protein localises to the secretory vesicle membrane. Its subcellular location is the cell membrane. It is found in the melanosome. Its function is as follows. Cargo receptor involved in protein vesicular trafficking and quality control in the endoplasmic reticulum (ER) and Golgi. The p24 protein family is a group of transmembrane proteins that bind coat protein complex I/COPI and coat protein complex II/COPII involved in vesicular trafficking between the membranes. Acts at the lumenal side for incorporation of secretory cargo molecules into transport vesicles and involved in vesicle coat formation at the cytoplasmic side. Mainly functions in the early secretory pathway and cycles between the ER, ER-Golgi intermediate compartment (ERGIC) and Golgi, mediating cargo transport through COPI and COPII-coated vesicles. In COPII vesicle-mediated anterograde transport, involved in the transport of GPI-anchored proteins by acting together with TMED2 as their cargo receptor; the function specifically implies SEC24C and SEC24D of the COPII vesicle coat and lipid raft-like microdomains of the ER. Recognizes GPI anchors structural remodeled in the ER by the GPI inositol-deacylase/PGAP1 and the metallophosphoesterase MPPE1/PGAP5. In COPI vesicle-mediated retrograde transport, involved in the biogenesis of COPI vesicles and vesicle coat recruitment. Involved in trafficking of amyloid beta A4 protein and soluble APP-beta release (independent from the modulation of gamma-secretase activity). Involved in the KDELR2-mediated retrograde transport of the toxin A subunit (CTX-A-K63)together with COPI and the COOH terminus of KDELR2. On Golgi membranes, acts as a primary receptor for ARF1-GDP, a GTP-binding protein involved in COPI-vesicle formation. Increases coatomer-dependent GTPase-activating activity of ARFGAP2 which mediates the hydrolysis of ARF1-bound GTP and therefore modulates protein trafficking from the Golgi apparatus. Involved in the exocytic trafficking of G protein-coupled receptors F2LR1/PAR2 (trypsin and tryspin-like enzyme receptor), OPRM1 (opioid receptor) and P2RY4 (UTD and UDP receptor) from the Golgi to the plasma membrane, thus contributing to receptor resensitization. In addition to its cargo receptor activity, may also act as a protein channel after oligomerization, facilitating the post-translational entry of leaderless cytoplasmic cargo into the ERGIC. Involved in the translocation into ERGIC, the vesicle entry and the secretion of leaderless cargos (lacking the secretion signal sequence), including the mature form of interleukin 1/IL-1 family members, the alpha-crystallin B chain HSPB5, the carbohydrate-binding proteins galectin-1/LGALS1 and galectin-3/LGALS3, the microtubule-associated protein Tau/MAPT, and the annexin A1/ANXA1; the translocation process is dependent on cargo protein unfolding and enhanced by chaperones HSP90AB1 and HSP90B1/GRP9. Could also associates with the presenilin-dependent gamma-secretase complex in order to regulate gamma-cleavages of the amyloid beta A4 protein to yield amyloid-beta 40/Abeta40. The polypeptide is Transmembrane emp24 domain-containing protein 10 (Mus musculus (Mouse)).